Here is a 219-residue protein sequence, read N- to C-terminus: Putative NAD(P)H nitroreductase SSP0379 (219 aa).

This sequence belongs to the nitroreductase family. Requires FMN as cofactor.

This chain is Putative NAD(P)H nitroreductase SSP0379, found in Staphylococcus saprophyticus subsp. saprophyticus (strain ATCC 15305 / DSM 20229 / NCIMB 8711 / NCTC 7292 / S-41).